A 142-amino-acid chain; its full sequence is Large ribosomal subunit protein uL13 (142 aa).

It belongs to the universal ribosomal protein uL13 family. Part of the 50S ribosomal subunit.

Functionally, this protein is one of the early assembly proteins of the 50S ribosomal subunit, although it is not seen to bind rRNA by itself. It is important during the early stages of 50S assembly. This chain is Large ribosomal subunit protein uL13, found in Pseudomonas syringae pv. tomato (strain ATCC BAA-871 / DC3000).